The chain runs to 239 residues: Transcriptional regulatory protein DcuR (239 aa).

In terms of domain architecture, Response regulatory spans 3-121; it reads NVLIIDDDAM…RFEEALTGWR (119 aa). Aspartate 56 is modified (4-aspartylphosphate). A DNA-binding region (H-T-H motif) is located at residues 181 to 200; the sequence is TDELANEVNISRVSCRKYLI.

In terms of processing, phosphorylated and activated by DcuS.

It localises to the cytoplasm. In terms of biological role, member of the two-component regulatory system DcuR/DcuS. Involved in the C4-dicarboxylate-stimulated regulation of the genes encoding the anaerobic fumarate respiratory system (frdABCD; nuoAN; dcuB; dcuC; sdhCDAB; etc.). Weakly regulates the aerobic C4-dicarboxylate transporter dctA. In Escherichia coli O6:H1 (strain CFT073 / ATCC 700928 / UPEC), this protein is Transcriptional regulatory protein DcuR (dcuR).